A 196-amino-acid chain; its full sequence is Peptidyl-tRNA hydrolase (196 aa).

Residue Y21 coordinates tRNA. H26 functions as the Proton acceptor in the catalytic mechanism. 3 residues coordinate tRNA: F72, N74, and N120.

The protein belongs to the PTH family. As to quaternary structure, monomer.

Its subcellular location is the cytoplasm. The catalysed reaction is an N-acyl-L-alpha-aminoacyl-tRNA + H2O = an N-acyl-L-amino acid + a tRNA + H(+). Functionally, hydrolyzes ribosome-free peptidyl-tRNAs (with 1 or more amino acids incorporated), which drop off the ribosome during protein synthesis, or as a result of ribosome stalling. Its function is as follows. Catalyzes the release of premature peptidyl moieties from peptidyl-tRNA molecules trapped in stalled 50S ribosomal subunits, and thus maintains levels of free tRNAs and 50S ribosomes. The chain is Peptidyl-tRNA hydrolase from Mycobacteroides abscessus (strain ATCC 19977 / DSM 44196 / CCUG 20993 / CIP 104536 / JCM 13569 / NCTC 13031 / TMC 1543 / L948) (Mycobacterium abscessus).